The sequence spans 31 residues: Photosystem II reaction center protein T (31 aa).

A helical transmembrane segment spans residues 3-23 (AFTYTLLMTLGVVTLFFAVAF).

It belongs to the PsbT family. In terms of assembly, PSII is composed of 1 copy each of membrane proteins PsbA, PsbB, PsbC, PsbD, PsbE, PsbF, PsbH, PsbI, PsbJ, PsbK, PsbL, PsbM, PsbT, PsbX, PsbY, Psb30/Ycf12, peripheral proteins PsbO, CyanoQ (PsbQ), PsbU, PsbV and a large number of cofactors. It forms dimeric complexes.

It is found in the cellular thylakoid membrane. Functionally, found at the monomer-monomer interface of the photosystem II (PS II) dimer, plays a role in assembly and dimerization of PSII. PSII is a light-driven water plastoquinone oxidoreductase, using light energy to abstract electrons from H(2)O, generating a proton gradient subsequently used for ATP formation. The chain is Photosystem II reaction center protein T from Prochlorococcus marinus (strain SARG / CCMP1375 / SS120).